A 370-amino-acid polypeptide reads, in one-letter code: UDP-N-acetylglucosamine--N-acetylmuramyl-(pentapeptide) pyrophosphoryl-undecaprenol N-acetylglucosamine transferase (370 aa).

Residues 10 to 12 (TGG), Asn-124, Arg-166, Ser-198, Ile-252, and Gln-297 contribute to the UDP-N-acetyl-alpha-D-glucosamine site.

This sequence belongs to the glycosyltransferase 28 family. MurG subfamily.

The protein localises to the cell membrane. The enzyme catalyses di-trans,octa-cis-undecaprenyl diphospho-N-acetyl-alpha-D-muramoyl-L-alanyl-D-glutamyl-meso-2,6-diaminopimeloyl-D-alanyl-D-alanine + UDP-N-acetyl-alpha-D-glucosamine = di-trans,octa-cis-undecaprenyl diphospho-[N-acetyl-alpha-D-glucosaminyl-(1-&gt;4)]-N-acetyl-alpha-D-muramoyl-L-alanyl-D-glutamyl-meso-2,6-diaminopimeloyl-D-alanyl-D-alanine + UDP + H(+). It participates in cell wall biogenesis; peptidoglycan biosynthesis. Cell wall formation. Catalyzes the transfer of a GlcNAc subunit on undecaprenyl-pyrophosphoryl-MurNAc-pentapeptide (lipid intermediate I) to form undecaprenyl-pyrophosphoryl-MurNAc-(pentapeptide)GlcNAc (lipid intermediate II). This Finegoldia magna (strain ATCC 29328 / DSM 20472 / WAL 2508) (Peptostreptococcus magnus) protein is UDP-N-acetylglucosamine--N-acetylmuramyl-(pentapeptide) pyrophosphoryl-undecaprenol N-acetylglucosamine transferase.